A 370-amino-acid polypeptide reads, in one-letter code: Ubiquitin carboxyl-terminal hydrolase 12 (370 aa).

A Required for plasma membrane localization of USP12/WDR20 motif is present at residues Met-1–Leu-4. The USP domain maps to Phe-39–Arg-369. Cys-48 serves as the catalytic Nucleophile. Positions Gln-146–Asp-157 are enriched in basic and acidic residues. The tract at residues Gln-146–Asp-168 is disordered. Cys-186, Cys-189, Cys-233, and Cys-236 together coordinate Zn(2+). Catalysis depends on His-317, which acts as the Proton acceptor.

This sequence belongs to the peptidase C19 family. USP12/USP46 subfamily. As to quaternary structure, interacts with WDR48. Interacts with WDR20; this interaction promotes translocation of the USP12 complex to the plasma membrane. Component of the USP12/WDR20/WDR48 deubiquitinating complex. Component of the USP12/DMWD/WDR48 deubiquitinating complex. Interacts with PHLPP1. Interacts with RBPJ. Interacts with CBP; this interaction blocks the acetyltransferase activity of CREBBP.

It is found in the nucleus. The protein resides in the cytoplasm. The protein localises to the cell membrane. It catalyses the reaction Thiol-dependent hydrolysis of ester, thioester, amide, peptide and isopeptide bonds formed by the C-terminal Gly of ubiquitin (a 76-residue protein attached to proteins as an intracellular targeting signal).. Its activity is regulated as follows. Activated by interaction with WDR20; WDR48 and DMWD through different allosteric mechanisms. Deubiquitinating enzyme that plays various roles in the regulation of the immune response and inflammation. During TCR engagement and activation, translocates into the cytoplasm and deubiquitinates its substrates LAT and TRAT1 and prevents their lysosome-dependent degradation to stabilize the TCR signaling complex at the plasma membrane. Plays an essential role in the selective LPS-induced macrophage response through the activation of NF-kappa-B pathway. In addition, promotes that antiviral immune response through targeting DNA sensor IFI16 to inhibit its proteasome-dependent degradation. Participates in the interferon signaling pathway and antiviral response independently of its deubiquitinase activity by maintaining nuclear phosphorylated STAT1 levels via inhibition of its CREBBP-mediated acetylation and subsequent dephosphorylation. Plays an intrinsic role in promoting the differentiation, activation and proliferation of CD4(+) T-cell by activating the NF-kappa-B signaling pathway through deubiquitinating and stabilizing B-cell lymphoma/leukemia 10/BCL10. In myeloid-derived suppressor cells promotes the activation of the NF-kappa-B via deubiquitination and stabilization of RELA. Regulates the 'Lys-63'-linked polyubiquitin chains of BAX and thereby modulates the mitochondrial apoptotic process. Negative regulator of NOTCH signaling that specifically deubiquitinates non-activated NOTCH receptors to target them for lysosomal degradation; deubiquitination of NOTCH stimulates its transport form late endosomes to lysosomes. Protects neurons against HTT/huntingtin-induced polyglutamine expansion-dependent neurodegeneration through regulation of autophagic flux. This function is independent of deubiquitinase activity or of other components of the USP12-WDR20-WDR48 deubiquitinating complex. In complex with WDR48, acts as a potential tumor suppressor by positively regulating PHLPP1 stability. This chain is Ubiquitin carboxyl-terminal hydrolase 12 (Usp12), found in Mus musculus (Mouse).